An 809-amino-acid chain; its full sequence is DNA replication helicase (809 aa).

An ATP-binding site is contributed by 72–79; that stretch reads GTAGAGKS.

It belongs to the herpesviridae helicase family. In terms of assembly, associates with the primase and the primase-associated factor to form the helicase-primase complex.

The protein resides in the host nucleus. In terms of biological role, component of the helicase/primase complex. Unwinds the DNA at the replication forks and generates single-stranded DNA for both leading and lagging strand synthesis. The primase synthesizes short RNA primers on the lagging strand that the polymerase elongates using dNTPs. Possesses helicase-like motifs and therefore may act as the helicase subunit of the complex. The chain is DNA replication helicase from Epstein-Barr virus (strain B95-8) (HHV-4).